Here is a 501-residue protein sequence, read N- to C-terminus: IQ domain-containing protein M (501 aa).

Positions 237-247 (ERQPIKPEPKS) are enriched in basic and acidic residues. The segment at 237-262 (ERQPIKPEPKSQPRIKGTPNKTDKLD) is disordered. Residues 290–319 (LIRMVTVMQAHVRGWLERKRLQRVMTKALD) enclose the IQ domain.

The protein is IQ domain-containing protein M of Homo sapiens (Human).